The chain runs to 414 residues: Gamma-glutamyl phosphate reductase (414 aa).

The protein belongs to the gamma-glutamyl phosphate reductase family.

The protein localises to the cytoplasm. The enzyme catalyses L-glutamate 5-semialdehyde + phosphate + NADP(+) = L-glutamyl 5-phosphate + NADPH + H(+). Its pathway is amino-acid biosynthesis; L-proline biosynthesis; L-glutamate 5-semialdehyde from L-glutamate: step 2/2. Its function is as follows. Catalyzes the NADPH-dependent reduction of L-glutamate 5-phosphate into L-glutamate 5-semialdehyde and phosphate. The product spontaneously undergoes cyclization to form 1-pyrroline-5-carboxylate. This is Gamma-glutamyl phosphate reductase from Xanthomonas oryzae pv. oryzae (strain KACC10331 / KXO85).